The sequence spans 1037 residues: Glycine dehydrogenase (decarboxylating) A, mitochondrial (1037 aa).

A mitochondrion-targeting transit peptide spans 1–66; the sequence is MERARRLANK…LNGFGSQVRT (66 aa). Residue Lys-773 is modified to N6-(pyridoxal phosphate)lysine.

This sequence belongs to the GcvP family. As to quaternary structure, homodimer. The glycine cleavage system is composed of four proteins: P, T, L and H. Requires pyridoxal 5'-phosphate as cofactor. In terms of tissue distribution, expressed in leaves, stems and roots.

Its subcellular location is the mitochondrion. It catalyses the reaction N(6)-[(R)-lipoyl]-L-lysyl-[glycine-cleavage complex H protein] + glycine + H(+) = N(6)-[(R)-S(8)-aminomethyldihydrolipoyl]-L-lysyl-[glycine-cleavage complex H protein] + CO2. Functionally, the glycine cleavage system catalyzes the degradation of glycine. The P protein binds the alpha-amino group of glycine through its pyridoxal phosphate cofactor; CO(2) is released and the remaining methylamine moiety is then transferred to the lipoamide cofactor of the H protein. This Flaveria pringlei protein is Glycine dehydrogenase (decarboxylating) A, mitochondrial (GDCSPA).